The sequence spans 66 residues: MMKVQELRTKTEDELRKELLELSRERFKLRMQMGTGQLVRNSELKRVRRSIARVKTVLTEKQQQAQ.

It belongs to the universal ribosomal protein uL29 family.

In Nitrosococcus oceani (strain ATCC 19707 / BCRC 17464 / JCM 30415 / NCIMB 11848 / C-107), this protein is Large ribosomal subunit protein uL29.